A 461-amino-acid chain; its full sequence is Protein KlcB (461 aa).

Disordered regions lie at residues 84–107 and 349–379; these read PEATTPAARRRTKARKSKPQTEDK and RAKAQEPAGQRREPVTPAKPEPEPAKDEDAP. Residues 91–101 are compositionally biased toward basic residues; sequence ARRRTKARKSK. A compositionally biased stretch (basic and acidic residues) spans 357-377; it reads GQRREPVTPAKPEPEPAKDED.

In Escherichia coli, this protein is Protein KlcB (klcB).